The following is a 758-amino-acid chain: Translation initiation factor IF-2 (758 aa).

The segment at E55 to K168 is disordered. Polar residues-rich tracts occupy residues K60–H78 and Q86–P95. Low complexity predominate over residues K96–R136. One can recognise a tr-type G domain in the interval E259–K428. The segment at G268–T275 is G1. G268–T275 contacts GTP. The tract at residues G293 to H297 is G2. Residues D314–G317 form a G3 region. GTP contacts are provided by residues D314–H318 and N368–D371. Residues N368–D371 form a G4 region. The G5 stretch occupies residues S404–L406.

The protein belongs to the TRAFAC class translation factor GTPase superfamily. Classic translation factor GTPase family. IF-2 subfamily.

It is found in the cytoplasm. Functionally, one of the essential components for the initiation of protein synthesis. Protects formylmethionyl-tRNA from spontaneous hydrolysis and promotes its binding to the 30S ribosomal subunits. Also involved in the hydrolysis of GTP during the formation of the 70S ribosomal complex. The chain is Translation initiation factor IF-2 from Lysinibacillus sphaericus (strain C3-41).